The following is a 152-amino-acid chain: UPF0260 protein BAB1_1496 (152 aa).

Belongs to the UPF0260 family.

This Brucella abortus (strain 2308) protein is UPF0260 protein BAB1_1496.